Reading from the N-terminus, the 615-residue chain is DNA mismatch repair protein MutL (615 aa).

Positions 369–397 are disordered; that stretch reads REPVAPRYTPAPASGSRPAAPWPNAQPGY. Residues 378-391 are compositionally biased toward low complexity; sequence PAPASGSRPAAPWP.

Belongs to the DNA mismatch repair MutL/HexB family.

In terms of biological role, this protein is involved in the repair of mismatches in DNA. It is required for dam-dependent methyl-directed DNA mismatch repair. May act as a 'molecular matchmaker', a protein that promotes the formation of a stable complex between two or more DNA-binding proteins in an ATP-dependent manner without itself being part of a final effector complex. The protein is DNA mismatch repair protein MutL of Escherichia coli (strain SMS-3-5 / SECEC).